The chain runs to 697 residues: Elongation factor G (697 aa).

The 276-residue stretch at 8–283 folds into the tr-type G domain; it reads ERMRNIGIAA…AVVDYLPSPL (276 aa). GTP-binding positions include 17–24, 81–85, and 135–138; these read AHIDAGKT, DTPGH, and NKMD.

This sequence belongs to the TRAFAC class translation factor GTPase superfamily. Classic translation factor GTPase family. EF-G/EF-2 subfamily.

It is found in the cytoplasm. Catalyzes the GTP-dependent ribosomal translocation step during translation elongation. During this step, the ribosome changes from the pre-translocational (PRE) to the post-translocational (POST) state as the newly formed A-site-bound peptidyl-tRNA and P-site-bound deacylated tRNA move to the P and E sites, respectively. Catalyzes the coordinated movement of the two tRNA molecules, the mRNA and conformational changes in the ribosome. The polypeptide is Elongation factor G (Solibacter usitatus (strain Ellin6076)).